The following is a 239-amino-acid chain: Ribosomal RNA small subunit methyltransferase G (239 aa).

Residues glycine 79, phenylalanine 84, 130–131 (AE), and arginine 149 each bind S-adenosyl-L-methionine.

The protein belongs to the methyltransferase superfamily. RNA methyltransferase RsmG family.

Its subcellular location is the cytoplasm. Specifically methylates the N7 position of a guanine in 16S rRNA. The sequence is that of Ribosomal RNA small subunit methyltransferase G from Lactobacillus johnsonii (strain CNCM I-12250 / La1 / NCC 533).